A 1405-amino-acid polypeptide reads, in one-letter code: DNA-directed RNA polymerase subunit beta' (1405 aa).

Zn(2+) is bound by residues Cys71, Cys73, Cys86, and Cys89. Mg(2+)-binding residues include Asp462, Asp464, and Asp466. Zn(2+) is bound by residues Cys820, Cys893, Cys900, and Cys903.

This sequence belongs to the RNA polymerase beta' chain family. In terms of assembly, the RNAP catalytic core consists of 2 alpha, 1 beta, 1 beta' and 1 omega subunit. When a sigma factor is associated with the core the holoenzyme is formed, which can initiate transcription. The cofactor is Mg(2+). Zn(2+) is required as a cofactor.

The catalysed reaction is RNA(n) + a ribonucleoside 5'-triphosphate = RNA(n+1) + diphosphate. Functionally, DNA-dependent RNA polymerase catalyzes the transcription of DNA into RNA using the four ribonucleoside triphosphates as substrates. The chain is DNA-directed RNA polymerase subunit beta' from Methylorubrum extorquens (strain CM4 / NCIMB 13688) (Methylobacterium extorquens).